The primary structure comprises 203 residues: Ribosome maturation factor RimP (203 aa).

Positions 183–203 are disordered; that stretch reads FDDIETEGSAEGTTGSEEENK.

The protein belongs to the RimP family.

It is found in the cytoplasm. In terms of biological role, required for maturation of 30S ribosomal subunits. The chain is Ribosome maturation factor RimP from Ruegeria sp. (strain TM1040) (Silicibacter sp.).